A 485-amino-acid polypeptide reads, in one-letter code: Chromosomal replication initiator protein DnaA (485 aa).

A domain I, interacts with DnaA modulators region spans residues 1 to 74; it reads MEKSKNIWSL…ILTNNGYDNV (74 aa). Positions 74–140 are domain II; it reads VTIVFTNQSP…EEEPKNFKNP (67 aa). A domain III, AAA+ region region spans residues 141–357; the sequence is FLKKRYTFEN…AAVTKLKAYI (217 aa). Residues glycine 185, glycine 187, lysine 188, and threonine 189 each coordinate ATP. The interval 358-485 is domain IV, binds dsDNA; the sequence is DLDNIEIDID…TELMNKIKKN (128 aa).

The protein belongs to the DnaA family. As to quaternary structure, oligomerizes as a right-handed, spiral filament on DNA at oriC.

Its subcellular location is the cytoplasm. Plays an essential role in the initiation and regulation of chromosomal replication. ATP-DnaA binds to the origin of replication (oriC) to initiate formation of the DNA replication initiation complex once per cell cycle. Binds the DnaA box (a 9 base pair repeat at the origin) and separates the double-stranded (ds)DNA. Forms a right-handed helical filament on oriC DNA; dsDNA binds to the exterior of the filament while single-stranded (ss)DNA is stabiized in the filament's interior. The ATP-DnaA-oriC complex binds and stabilizes one strand of the AT-rich DNA unwinding element (DUE), permitting loading of DNA polymerase. After initiation quickly degrades to an ADP-DnaA complex that is not apt for DNA replication. Binds acidic phospholipids. The chain is Chromosomal replication initiator protein DnaA from Borreliella afzelii (strain PKo) (Borrelia afzelii).